We begin with the raw amino-acid sequence, 287 residues long: Inorganic pyrophosphatase (287 aa).

Arginine 79 contributes to the diphosphate binding site. Mg(2+) is bound by residues aspartate 116, aspartate 121, and aspartate 153.

This sequence belongs to the PPase family. Requires Mg(2+) as cofactor.

It is found in the cytoplasm. It catalyses the reaction diphosphate + H2O = 2 phosphate + H(+). In Zygosaccharomyces bailii, this protein is Inorganic pyrophosphatase (IPP1).